A 478-amino-acid polypeptide reads, in one-letter code: MKIELVFIPLPGIGHLRPTVKLAKQLIGSENRLSITIIIIPSRFDAGDASACIASLTTLSQDDRLHYESISVAKQPPTSDPDPVPAQVYIEKQKTKVRDAVAARIVDPTRKLAGFVVDMFCSSMIDVANEFGVPCYMVYTSNATFLGTMLHVQQMYDQKKYDVSELENSVTELEFPSLTRPYPVKCLPHILTSKEWLPLSLAQARCFRKMKGILVNTVAELEPHALKMFNINGDDLPQVYPVGPVLHLENGNDDDEKQSEILRWLDEQPSKSVVFLCFGSLGGFTEEQTRETAVALDRSGQRFLWCLRHASPNIKTDRPRDYTNLEEVLPEGFLERTLDRGKVIGWAPQVAVLEKPAIGGFVTHCGWNSILESLWFGVPMVTWPLYAEQKVNAFEMVEELGLAVEIRKYLKGDLFAGEMETVTAEDIERAIRRVMEQDSDVRNNVKEMAEKCHFALMDGGSSKAALEKFIQDVIENMD.

Residues Ser-280, 347 to 349, 364 to 372, and 386 to 389 each bind UDP-alpha-D-glucose; these read APQ, HCGWNSILE, and YAEQ.

Belongs to the UDP-glycosyltransferase family.

Functionally, possesses low quercetin 3-O-glucosyltransferase activity in vitro. The protein is UDP-glycosyltransferase 71B5 (UGT71B5) of Arabidopsis thaliana (Mouse-ear cress).